Reading from the N-terminus, the 125-residue chain is Prefoldin subunit beta (125 aa).

The protein belongs to the prefoldin subunit beta family. Heterohexamer of two alpha and four beta subunits.

The protein localises to the cytoplasm. Molecular chaperone capable of stabilizing a range of proteins. Seems to fulfill an ATP-independent, HSP70-like function in archaeal de novo protein folding. The polypeptide is Prefoldin subunit beta (Pyrobaculum islandicum (strain DSM 4184 / JCM 9189 / GEO3)).